A 116-amino-acid chain; its full sequence is S-adenosylmethionine decarboxylase proenzyme (116 aa).

The active-site Schiff-base intermediate with substrate; via pyruvic acid is serine 63. At serine 63 the chain carries Pyruvic acid (Ser); by autocatalysis. Residue histidine 68 is the Proton acceptor; for processing activity of the active site. The Proton donor; for catalytic activity role is filled by cysteine 83.

The protein belongs to the prokaryotic AdoMetDC family. Type 1 subfamily. As to quaternary structure, heterotetramer of two alpha and two beta chains arranged as a dimer of alpha/beta heterodimers. Requires pyruvate as cofactor. Is synthesized initially as an inactive proenzyme. Formation of the active enzyme involves a self-maturation process in which the active site pyruvoyl group is generated from an internal serine residue via an autocatalytic post-translational modification. Two non-identical subunits are generated from the proenzyme in this reaction, and the pyruvate is formed at the N-terminus of the alpha chain, which is derived from the carboxyl end of the proenzyme. The post-translation cleavage follows an unusual pathway, termed non-hydrolytic serinolysis, in which the side chain hydroxyl group of the serine supplies its oxygen atom to form the C-terminus of the beta chain, while the remainder of the serine residue undergoes an oxidative deamination to produce ammonia and the pyruvoyl group blocking the N-terminus of the alpha chain.

It carries out the reaction S-adenosyl-L-methionine + H(+) = S-adenosyl 3-(methylsulfanyl)propylamine + CO2. Its pathway is amine and polyamine biosynthesis; S-adenosylmethioninamine biosynthesis; S-adenosylmethioninamine from S-adenosyl-L-methionine: step 1/1. Catalyzes the decarboxylation of S-adenosylmethionine to S-adenosylmethioninamine (dcAdoMet), the propylamine donor required for the synthesis of the polyamines spermine and spermidine from the diamine putrescine. The sequence is that of S-adenosylmethionine decarboxylase proenzyme from Clostridium botulinum (strain 657 / Type Ba4).